A 1136-amino-acid chain; its full sequence is Type I inositol polyphosphate 5-phosphatase 13 (1136 aa).

5 WD repeats span residues 147–185, 205–244, 259–297, 436–475, and 515–552; these read ETQTGRFLRNIACTETQLWAGQENGIRFWNLEDAYEAGC, VTTSPTMCLVADQSNKLLWSGHKDGKIRAWKMDQSSVSHD, AHRGPVNSIVISSYGDMWSCSEGGVIKIWPWDTLEKSLL, EDTRKTEAIVLAVDGTIWTGSISGLIVQWDGNGNRLRDVN, and SHNEPVIKLAAGGGFIFSLATHGGVRGWYVTSPGPLDN. Catalytic regions lie at residues 782-798 and 861-876; these read DMVAFFGDFNYRLFGIT and KKRIPAWCDRVIYRDT. Lysine 940 participates in a covalent cross-link: Glycyl lysine isopeptide (Lys-Gly) (interchain with G-Cter in ubiquitin). The disordered stretch occupies residues 1104–1136; that stretch reads KNLGGSRRYPTDITRNGSTRPRTEDSVRRGKSR. Positions 1124-1136 are enriched in basic and acidic residues; it reads PRTEDSVRRGKSR.

Belongs to the inositol polyphosphate 5-phosphatase family. As to quaternary structure, interacts with KIN10, but not with PHOT1. Mg(2+) serves as cofactor. In terms of tissue distribution, expressed in young seedlings and flowers. Highly expressed in anther and pollen grains, but not in pistils. Not detected in maturated roots, stems and rosette leaves.

It is found in the nucleus. It catalyses the reaction 1D-myo-inositol 1,4,5-trisphosphate + H2O = 1D-myo-inositol 1,4-bisphosphate + phosphate. In terms of biological role, converts inositol 1,4,5-trisphosphate (Ins(1,4,5)P3) to inositol 1,4-bisphosphate. Modulates cotyledon vein development through regulating auxin homeostasis. Involved in blue light responses. Decreases the amount of KIN10 degraded by the proteasome under low nutrient conditions. Participates with IP5P12 in the control of Ins(1,4,5)P3/Ca(2+) levels that is crucial for maintaining pollen dormancy and regulating early germination of pollen. May modulate auxin transport by regulating vesicle trafficking and thereby plays a role in root gravitropism. The protein is Type I inositol polyphosphate 5-phosphatase 13 of Arabidopsis thaliana (Mouse-ear cress).